The sequence spans 65 residues: VESP-VB2 (65 aa).

A signal peptide spans 1–23 (MKMSILFLFALIASLACLQLTFA). AXPX repeat units lie at residues 23 to 26 (AAPA), 27 to 30 (ASPF), 31 to 34 (ANPG), 35 to 38 (ASPE), 39 to 42 (AAPL), 43 to 46 (ADPL), and 47 to 50 (ADPF). A propeptide spanning residues 24–49 (APAASPFANPGASPEAAPLADPLADP) is cleaved from the precursor. Residue leucine 62 is modified to Leucine amide.

It belongs to the MCD family. Mastoparan subfamily. As to expression, expressed by the venom gland.

The protein localises to the secreted. Functionally, antimicrobial peptide. Shows activity against both Gram-positive and -negative bacteria, as well against fungi. Also promotes important mast cell degranulation. Shows little hemolytic activity on rabbit and human erythrocytes. Its mast cell degranulation activity may be related to the activation of G-protein coupled receptors in mast cells as well as interaction with other proteins located in cell endosomal membranes in the mast cells. This is VESP-VB2 from Vespa bicolor (Black shield wasp).